Reading from the N-terminus, the 795-residue chain is Protocadherin beta-5 (795 aa).

Residues 1–30 form the signal peptide; that stretch reads METALAKTPQKRQVMFLAILLLLWEAGSEA. At 31–689 the chain is on the extracellular side; that stretch reads VRYSIPEETE…AQADSLTVYL (659 aa). Cadherin domains follow at residues 35–133, 138–242, 247–346, 351–450, and 455–560; these read IPEE…SPEF, MLLK…APEF, YEVQ…APEL, LSSP…APAF, and YTLF…SPFV. An N-linked (GlcNAc...) asparagine glycan is attached at Asn-169. N6-acetyllysine is present on Lys-296. N-linked (GlcNAc...) asparagine glycosylation is found at Asn-417 and Asn-435. Residue Asn-566 is glycosylated (N-linked (GlcNAc...) asparagine). The Cadherin 6 domain maps to 567-670; it reads GSAPCTELVP…LVDGFSQPYL (104 aa). The chain crosses the membrane as a helical span at residues 690-710; it reads VVALASVSSLFLFSVLLFVAV. Residues 711–795 lie on the Cytoplasmic side of the membrane; that stretch reads RLCRRSRAAP…AAFRNSFGLN (85 aa).

The protein resides in the cell membrane. Potential calcium-dependent cell-adhesion protein. May be involved in the establishment and maintenance of specific neuronal connections in the brain. The chain is Protocadherin beta-5 (PCDHB5) from Pan troglodytes (Chimpanzee).